Consider the following 100-residue polypeptide: MAKKSLIEREKKRKILVQKYKFIRQSLKNEIKDASSLEEILAIHKELQSLPRNSAPTRLHRRCFLTGRPRSNYRDFGLSRHVLREMAHTCLLPGVTKSSW.

The protein belongs to the universal ribosomal protein uS14 family. In terms of assembly, part of the 30S ribosomal subunit.

The protein resides in the plastid. The protein localises to the chloroplast. In terms of biological role, binds 16S rRNA, required for the assembly of 30S particles. This chain is Small ribosomal subunit protein uS14c, found in Angiopteris evecta (Mule's foot fern).